A 478-amino-acid chain; its full sequence is Ribulose bisphosphate carboxylase large chain (478 aa).

The propeptide occupies 1-2; the sequence is MS. P3 carries the post-translational modification N-acetylproline. N6,N6,N6-trimethyllysine is present on K14. Substrate is bound by residues N123 and T173. The Proton acceptor role is filled by K175. K177 is a binding site for substrate. K201, D203, and E204 together coordinate Mg(2+). K201 carries the post-translational modification N6-carboxylysine. H294 functions as the Proton acceptor in the catalytic mechanism. Residues R295, H327, and S379 each coordinate substrate.

The protein belongs to the RuBisCO large chain family. Type I subfamily. Heterohexadecamer of 8 large chains and 8 small chains; disulfide-linked. The disulfide link is formed within the large subunit homodimers. The cofactor is Mg(2+). Post-translationally, the disulfide bond which can form in the large chain dimeric partners within the hexadecamer appears to be associated with oxidative stress and protein turnover.

It localises to the plastid. It is found in the chloroplast. The enzyme catalyses 2 (2R)-3-phosphoglycerate + 2 H(+) = D-ribulose 1,5-bisphosphate + CO2 + H2O. It catalyses the reaction D-ribulose 1,5-bisphosphate + O2 = 2-phosphoglycolate + (2R)-3-phosphoglycerate + 2 H(+). Its function is as follows. RuBisCO catalyzes two reactions: the carboxylation of D-ribulose 1,5-bisphosphate, the primary event in carbon dioxide fixation, as well as the oxidative fragmentation of the pentose substrate in the photorespiration process. Both reactions occur simultaneously and in competition at the same active site. The protein is Ribulose bisphosphate carboxylase large chain of Neurachne tenuifolia.